The chain runs to 1135 residues: Exportin-5 (1135 aa).

The region spanning 32 to 117 (SQVFLEEIKT…KEKLVTILVD (86 aa)) is the Importin N-terminal domain. Residues 630–631 (TE) are pre-siRNA binding.

This sequence belongs to the exportin family. As to quaternary structure, found in a nuclear export complex with RanGTP, exportin and pre-miRNA.

It is found in the nucleus. The protein localises to the cytoplasm. Mediates the nuclear export of proteins bearing a double-stranded RNA binding domain (dsRBD) and double-stranded RNAs (cargos). In terms of biological role, mediates the nuclear export of micro-RNA precursors, which form short hairpins. This Dictyostelium discoideum (Social amoeba) protein is Exportin-5 (xpo5).